Here is a 730-residue protein sequence, read N- to C-terminus: MAKEKGLISPEDFAQLQKYIEYSTKRVSDVLKVFDDGEMNRFCQGDAIGYLGFEQFMKMYLEMEEVPHHLCWALFWSFHTSQVAAEKTKSKANVICLSDVYCYFTLLEGGRPEDKLEFTFKLYDMDRNGILDSTEVEKIILQMMRVAEYLDWDVSELRPILQEMMREMDQDGSGSVSLDEWVRAGATTVPLLVLLGMDVTMKDDGNHIWRPKRFTRLVYCNLCEQSISLGKQGLSCNFCKYIVHDHCAMKAQPCEVSTYAKSRKDIGVQSHLWVRGGCHSGRCDRCQKKIRTYHSLTGLHCVWCHLEIHDDCLQAVGPECDCGLLRDHILPPCSIYPSVLVSGQECKHKTTDDTSLCTPEAFRIEPVSNTHPLLVFINLKSGGKQGQSVLWKFQYILNPRQVFDLKDGPEPGLRFFKDVPQFRILVCGGDGTVGWVLETIDKANFATVPPVAVLPLGTGNDLARCLRWGRGYEGENLRKILKDIELSKVVYLDRWFLEVIPQQNGEKSDPVPSQIINNYFSIGVDASIAHRFHLMREKYPEKFNSRMKNKLWYFEFATSESIFSTCKKLEESVTVEICGKLLDLSDLSLEGIAVLNIPSTHGGSNLWGDTKRPHGDTCEINQALGSAAKIITDPDILKTCVPDMSDKRLEVVGIEGAIEMGQIYTRLKSAGHRLAKCSEITFQTTKTLPMQIDGEPWMQAPCTIKITHKNQMPMLMGPPSNSYNFFGFWS.

2 EF-hand domains span residues 111 to 146 and 156 to 191; these read RPED…MMRV and ELRP…TVPL. Ca(2+) contacts are provided by aspartate 124, aspartate 126, asparagine 128, glutamate 135, aspartate 169, aspartate 171, serine 173, serine 175, and glutamate 180. 2 consecutive Phorbol-ester/DAG-type zinc fingers follow at residues 206–254 and 270–320; these read NHIW…AQPC and SHLW…GPEC. The 134-residue stretch at 368–501 folds into the DAGKc domain; sequence SNTHPLLVFI…LDRWFLEVIP (134 aa). Lysine 479 is subject to N6-acetyllysine.

The protein belongs to the eukaryotic diacylglycerol kinase family. As to quaternary structure, monomer.

The protein localises to the cytoplasm. It is found in the cytosol. It catalyses the reaction a 1,2-diacyl-sn-glycerol + ATP = a 1,2-diacyl-sn-glycero-3-phosphate + ADP + H(+). It carries out the reaction a 1-O-alkyl-sn-glycerol + ATP = a 1-O-alkyl-sn-glycero-3-phosphate + ADP + H(+). The enzyme catalyses 1-O-alkyl-2-acyl-sn-glycerol + ATP = 1-O-alkyl-2-acyl-sn-glycero-3-phosphate + ADP + H(+). The catalysed reaction is 1,2-dihexadecanoyl-sn-glycerol + ATP = 1,2-dihexadecanoyl-sn-glycero-3-phosphate + ADP + H(+). It catalyses the reaction 1-hexadecanoyl-2-(9Z-octadecenoyl)-sn-glycerol + ATP = 1-hexadecanoyl-2-(9Z-octadecenoyl)-sn-glycero-3-phosphate + ADP + H(+). It carries out the reaction 2-(9Z-octadecenoyl)-glycerol + ATP = 2-(9Z-octadecenoyl)-sn-glycero-3-phosphate + ADP + H(+). The enzyme catalyses 1,2-di-(9Z-octadecenoyl)-sn-glycerol + ATP = 1,2-di-(9Z-octadecenoyl)-sn-glycero-3-phosphate + ADP + H(+). The catalysed reaction is 1-octadecanoyl-2-(5Z,8Z,11Z,14Z-eicosatetraenoyl)-sn-glycerol + ATP = 1-octadecanoyl-2-(5Z,8Z,11Z,14Z-eicosatetraenoyl)-sn-glycero-3-phosphate + ADP + H(+). It catalyses the reaction 1,2-didecanoyl-sn-glycerol + ATP = 1,2-didecanoyl-sn-glycero-3-phosphate + ADP + H(+). It carries out the reaction 1-O-hexadecyl-2-acetyl-sn-glycerol + ATP = 1-O-hexadecyl-2-acetyl-sn-glycero-3-phosphate + ADP + H(+). The enzyme catalyses 1-O-hexadecyl-2-(5Z,8Z,11Z,14Z-eicosatetraenoyl)-sn-glycerol + ATP = 1-O-hexadecyl-2-(5Z,8Z,11Z,14Z-eicosatetraenoyl)-sn-glycero-3-phosphate + ADP + H(+). The catalysed reaction is 1-O-hexadecyl-2-(9Z-octadecenoyl)-sn-glycerol + ATP = 1-O-hexadecyl-2-(9Z-octadecenoyl)-sn-glycero-3-phosphate + ADP + H(+). It catalyses the reaction 1-O-hexadecyl-sn-glycerol + ATP = 1-O-hexadecyl-sn-glycero-3-phosphate + ADP + H(+). Its pathway is lipid metabolism; glycerolipid metabolism. Its activity is regulated as follows. Stimulated by calcium and phosphatidylserine. Its function is as follows. Diacylglycerol kinase that converts diacylglycerol/DAG into phosphatidic acid/phosphatidate/PA and regulates the respective levels of these two bioactive lipids. Thereby, acts as a central switch between the signaling pathways activated by these second messengers with different cellular targets and opposite effects in numerous biological processes. Also plays an important role in the biosynthesis of complex lipids. Can also phosphorylate 1-alkyl-2-acylglycerol in vitro as efficiently as diacylglycerol provided it contains an arachidonoyl group. Also involved in the production of alkyl-lysophosphatidic acid, another bioactive lipid, through the phosphorylation of 1-alkyl-2-acetyl glycerol. The protein is Diacylglycerol kinase alpha (Dgka) of Mus musculus (Mouse).